Here is a 334-residue protein sequence, read N- to C-terminus: Large ribosomal subunit protein uL3 (334 aa).

Residues 1-10 (MGMKKSRPRR) are compositionally biased toward basic residues. Positions 1–20 (MGMKKSRPRRGSLAFSPRKR) are disordered.

Belongs to the universal ribosomal protein uL3 family. As to quaternary structure, part of the 50S ribosomal subunit. Forms a cluster with proteins L14 and L24e.

One of the primary rRNA binding proteins, it binds directly near the 3'-end of the 23S rRNA, where it nucleates assembly of the 50S subunit. The chain is Large ribosomal subunit protein uL3 from Methanococcus maripaludis (strain C6 / ATCC BAA-1332).